The following is a 114-amino-acid chain: Cuticle protein AMP5 (114 aa).

Position 1 is a pyrrolidone carboxylic acid (Gln-1). A Chitin-binding type R&amp;R domain is found at Ala-18–Pro-83.

In terms of tissue distribution, arthrodial membrane.

The sequence is that of Cuticle protein AMP5 from Homarus americanus (American lobster).